The following is a 353-amino-acid chain: Envelope glycoprotein M (353 aa).

The Intravirion portion of the chain corresponds to 1-27 (MAKAGVMTLSHVDRMNLRTWTMAIACC). A helical membrane pass occupies residues 28 to 48 (LLSFVNIVVFSVAAHFPGIGF). Residues 49 to 82 (PCYYPRIIDFDNMNLTMYNAIHHLTPQLFLDPVQ) are Virion surface-facing. The chain crosses the membrane as a helical span at residues 83–103 (LIVYVIFTELIFFCVLSYYIV). The Intravirion segment spans residues 104-132 (CWVQIYFRSEHGTQVNQSTRDINFMGDSA). Residues 133–153 (TCFTFVLTMDTFQIFLLSLSF) form a helical membrane-spanning segment. The Virion surface portion of the chain corresponds to 154-157 (RLPS). The helical transmembrane segment at 158–178 (MVAFSKCMYFMCLTAFVVTLV) threads the bilayer. Residues 179 to 210 (THYESRERSAFALSKIHPKLQGTIRYRTAVVN) lie on the Intravirion side of the membrane. A helical membrane pass occupies residues 211–231 (LTQLILGFATMVLAMSLALGF). Topologically, residues 232–240 (GNSFFVKTA) are virion surface. A helical membrane pass occupies residues 241–261 (HVVFGAMVAFAIVACVYFSII). The Intravirion segment spans residues 262 to 270 (ESVLSRYMK). Residues 271–291 (VQFGYHIGTILGVCGAMYPII) traverse the membrane as a helical segment. At 292–304 (RYEALNASSYARD) the chain is on the virion surface side. Residues 305–325 (INIGITVLLLLCVAFSVIRTV) form a helical membrane-spanning segment. The Intravirion portion of the chain corresponds to 326 to 353 (RFLLRRNKRYRALALDNEEIRALRSDAE).

This sequence belongs to the herpesviridae glycoprotein M family. In terms of assembly, interacts (via N-terminus) with gN (via N-terminus). The gM-gN heterodimer forms the gCII complex.

The protein localises to the virion membrane. The protein resides in the host Golgi apparatus. Its subcellular location is the host trans-Golgi network. It localises to the host endosome membrane. It is found in the host nucleus inner membrane. Its function is as follows. Envelope glycoprotein important for virion assembly and egress. Plays a role in the correct incorporation of gH-gL into virion membrane. Directs the glycoprotein N (gN) to the host trans-Golgi network. This is Envelope glycoprotein M from Mus musculus (Mouse).